A 164-amino-acid polypeptide reads, in one-letter code: R-phycoerythrin alpha chain (164 aa).

(2R,3E)-phycoerythrobilin-binding residues include Cys82 and Cys139.

This sequence belongs to the phycobiliprotein family. In terms of assembly, heterodimer of an alpha and a beta chain. Post-translationally, contains two covalently linked bilin chromophores.

It localises to the plastid. The protein localises to the chloroplast thylakoid membrane. Light-harvesting photosynthetic bile pigment-protein from the phycobiliprotein complex. This is R-phycoerythrin alpha chain (cpeA) from Pyropia haitanensis (Red seaweed).